The following is a 123-amino-acid chain: Ribosome-binding factor A (123 aa).

This sequence belongs to the RbfA family. In terms of assembly, monomer. Binds 30S ribosomal subunits, but not 50S ribosomal subunits or 70S ribosomes.

It is found in the cytoplasm. One of several proteins that assist in the late maturation steps of the functional core of the 30S ribosomal subunit. Associates with free 30S ribosomal subunits (but not with 30S subunits that are part of 70S ribosomes or polysomes). Required for efficient processing of 16S rRNA. May interact with the 5'-terminal helix region of 16S rRNA. The protein is Ribosome-binding factor A of Rickettsia bellii (strain OSU 85-389).